The sequence spans 490 residues: ATP synthase subunit alpha 1 (490 aa).

Belongs to the ATPase alpha/beta chains family. As to quaternary structure, F-type ATPases have 2 components, CF(1) - the catalytic core - and CF(0) - the membrane proton channel. CF(1) has five subunits: alpha(3), beta(3), gamma(1), delta(1), epsilon(1). CF(0) has three main subunits: a(1), b(2) and c(9-12). The alpha and beta chains form an alternating ring which encloses part of the gamma chain. CF(1) is attached to CF(0) by a central stalk formed by the gamma and epsilon chains, while a peripheral stalk is formed by the delta and b chains.

It localises to the cell inner membrane. The enzyme catalyses ATP + H2O + 4 H(+)(in) = ADP + phosphate + 5 H(+)(out). Produces ATP from ADP in the presence of a proton gradient across the membrane. The alpha chain is a regulatory subunit. The chain is ATP synthase subunit alpha 1 from Legionella pneumophila (strain Paris).